Reading from the N-terminus, the 290-residue chain is 33 kDa chaperonin (290 aa).

2 disulfide bridges follow: Cys235–Cys237 and Cys268–Cys271.

This sequence belongs to the HSP33 family. Under oxidizing conditions two disulfide bonds are formed involving the reactive cysteines. Under reducing conditions zinc is bound to the reactive cysteines and the protein is inactive.

It is found in the cytoplasm. In terms of biological role, redox regulated molecular chaperone. Protects both thermally unfolding and oxidatively damaged proteins from irreversible aggregation. Plays an important role in the bacterial defense system toward oxidative stress. In Streptococcus pneumoniae (strain CGSP14), this protein is 33 kDa chaperonin.